The sequence spans 287 residues: MSTASQHLYKRRRLINAAAITISCIAALFGLFFLIWILWTLISKGLPGIDLDLFTKITPPPMQKGGLANAFLGSAIMCLLAIVIGTPVGIAAGTWLAEYGNTSQTSTVVRFVNDILLSAPSIVLGLFVYTLYVMHTGGHFSAFSGALALVFIVLPIVVRTTDEMLRLVPGQMREAALSLGIPQWKMITQVLYRSASAGILTGILLALARISGETAPLLFTAFGNQYWSSNIFQPIASLPLVMNQFASSPYKSWQLLAWSGALVLTVFVLLVSLGARALLLRNKIPNT.

A run of 6 helical transmembrane segments spans residues 22–42 (ISCI…WTLI), 70–90 (AFLG…PVGI), 115–135 (ILLS…YVMH), 138–158 (GHFS…PIVV), 199–219 (ILTG…PLLF), and 255–275 (LLAW…SLGA). An ABC transmembrane type-1 domain is found at 71–279 (FLGSAIMCLL…LVSLGARALL (209 aa)).

This sequence belongs to the binding-protein-dependent transport system permease family. CysTW subfamily.

Its subcellular location is the cell inner membrane. Part of a binding-protein-dependent transport system for phosphate; probably responsible for the translocation of the substrate across the membrane. This Xylella fastidiosa (strain Temecula1 / ATCC 700964) protein is Phosphate transport system permease protein PstA (pstA).